We begin with the raw amino-acid sequence, 320 residues long: Ribosomal protein L11 methyltransferase (320 aa).

S-adenosyl-L-methionine contacts are provided by T165, G186, D208, and N251.

It belongs to the methyltransferase superfamily. PrmA family.

Its subcellular location is the cytoplasm. The enzyme catalyses L-lysyl-[protein] + 3 S-adenosyl-L-methionine = N(6),N(6),N(6)-trimethyl-L-lysyl-[protein] + 3 S-adenosyl-L-homocysteine + 3 H(+). Its function is as follows. Methylates ribosomal protein L11. The polypeptide is Ribosomal protein L11 methyltransferase (Limosilactobacillus fermentum (strain NBRC 3956 / LMG 18251) (Lactobacillus fermentum)).